The following is a 306-amino-acid chain: uncharacterized protein (306 aa).

Residues 13–39 (NMLNEIAANNNLLNNKNNQTNQLNNNQ) are a coiled coil. Disordered regions lie at residues 44 to 76 (YNNQNNNQNYPQNYPQNSQQNFQQNSQQNHQQN), 103 to 204 (DSKE…QSGQ), and 216 to 249 (QKQLDKNQPEKIPSKPEKNQKQSHKPKLPPTMQH). The span at 119–201 (HQQPIQNNPS…QFAQPNQYNQ (83 aa)) shows a compositional bias: low complexity. Positions 218-235 (QLDKNQPEKIPSKPEKNQ) are enriched in basic and acidic residues. A helical membrane pass occupies residues 279–299 (LFDYIIIPIALVLVFLFLVHP).

Its subcellular location is the membrane. This is an uncharacterized protein from Acanthamoeba polyphaga mimivirus (APMV).